The chain runs to 198 residues: Recombination protein RecR (198 aa).

A C4-type zinc finger spans residues 57–72; the sequence is CSVCGHITEEDPCYIC. Residues 80–175 form the Toprim domain; that stretch reads SVICVVEDDK…KVTRLAQGLS (96 aa).

Belongs to the RecR family.

Its function is as follows. May play a role in DNA repair. It seems to be involved in an RecBC-independent recombinational process of DNA repair. It may act with RecF and RecO. This chain is Recombination protein RecR, found in Staphylococcus carnosus (strain TM300).